Reading from the N-terminus, the 523-residue chain is Siroheme synthase (523 aa).

Residues 1–203 (MNTFPLFFKL…GNENEAIAQL (203 aa)) are precorrin-2 dehydrogenase /sirohydrochlorin ferrochelatase. NAD(+) is bound by residues 22–23 (DV) and 43–44 (PS). S128 bears the Phosphoserine mark. The tract at residues 231–523 (GEVYIVGAGP…DGGLEQLVID (293 aa)) is uroporphyrinogen-III C-methyltransferase. P240 is an S-adenosyl-L-methionine binding site. Residue D263 is the Proton acceptor of the active site. Residue K285 is the Proton donor of the active site. S-adenosyl-L-methionine contacts are provided by residues 316–318 (GGD), I321, 346–347 (TA), M398, and A427.

It in the N-terminal section; belongs to the precorrin-2 dehydrogenase / sirohydrochlorin ferrochelatase family. This sequence in the C-terminal section; belongs to the precorrin methyltransferase family.

The enzyme catalyses uroporphyrinogen III + 2 S-adenosyl-L-methionine = precorrin-2 + 2 S-adenosyl-L-homocysteine + H(+). It carries out the reaction precorrin-2 + NAD(+) = sirohydrochlorin + NADH + 2 H(+). It catalyses the reaction siroheme + 2 H(+) = sirohydrochlorin + Fe(2+). It functions in the pathway cofactor biosynthesis; adenosylcobalamin biosynthesis; precorrin-2 from uroporphyrinogen III: step 1/1. Its pathway is cofactor biosynthesis; adenosylcobalamin biosynthesis; sirohydrochlorin from precorrin-2: step 1/1. It participates in porphyrin-containing compound metabolism; siroheme biosynthesis; precorrin-2 from uroporphyrinogen III: step 1/1. The protein operates within porphyrin-containing compound metabolism; siroheme biosynthesis; siroheme from sirohydrochlorin: step 1/1. It functions in the pathway porphyrin-containing compound metabolism; siroheme biosynthesis; sirohydrochlorin from precorrin-2: step 1/1. Functionally, multifunctional enzyme that catalyzes the SAM-dependent methylations of uroporphyrinogen III at position C-2 and C-7 to form precorrin-2 via precorrin-1. Then it catalyzes the NAD-dependent ring dehydrogenation of precorrin-2 to yield sirohydrochlorin. Finally, it catalyzes the ferrochelation of sirohydrochlorin to yield siroheme. The chain is Siroheme synthase from Psychrobacter cryohalolentis (strain ATCC BAA-1226 / DSM 17306 / VKM B-2378 / K5).